Reading from the N-terminus, the 87-residue chain is Insertion element IS407 uncharacterized 10.0 kDa protein (87 aa).

The protein belongs to the transposase 8 family.

This Burkholderia multivorans (strain ATCC 17616 / 249) protein is Insertion element IS407 uncharacterized 10.0 kDa protein.